Reading from the N-terminus, the 248-residue chain is Gamma-glutamyl peptidase 2 (248 aa).

The region spanning 17-212 (SEFVKEMYGG…IDRVHKIKFV (196 aa)) is the Glutamine amidotransferase type-1 domain. The active-site Nucleophile is Cys-101. Catalysis depends on residues His-191 and Glu-193.

This sequence belongs to the peptidase C26 family.

The protein resides in the cytoplasm. It is found in the cytosol. The catalysed reaction is an S-[(1E)-1-(hydroxyimino)-omega-(methylsulfanyl)alkyl]-L-glutathione + H2O = an S-[(1E)-1-(hydroxyimino)-omega-(methylsulfanyl)alkyl]-L-cysteinylglycine + L-glutamate. It catalyses the reaction (E)-1-(glutathione-S-yl)-2-(1H-indol-3-yl)acetohydroximate + H2O = (E)-1-(glycyl-L-cystein-S-yl)-2-(1H-indol-3-yl)acetohydroximate + L-glutamate. It carries out the reaction 2-(glutathion-S-yl)-2-(1H-indol-3-yl)acetonitrile + H2O = 2-(glycyl-L-cystein-S-yl)-2-(1H-indol-3-yl)acetonitrile + L-glutamate. The enzyme catalyses (Z)-1-(glutathione-S-yl)-2-phenylacetohydroximate + H2O = (Z)-1-(glycyl-L-cystein-S-yl)-2-phenylacetohydroximate + L-glutamate. It functions in the pathway secondary metabolite biosynthesis. Functionally, involved in glucosinolate biosynthesis. Hydrolyzes the gamma-glutamyl peptide bond of several glutathione (GSH) conjugates to produce Cys-Gly conjugates related to glucosinolates. The gamma-Glu-Cys-Gly-GSH conjugates are the sulfur-donating molecule in glucosinolate biosynthesis. This chain is Gamma-glutamyl peptidase 2, found in Arabidopsis thaliana (Mouse-ear cress).